We begin with the raw amino-acid sequence, 205 residues long: MNEQLINRTMAFAGILQAIAQVQHLARHGELDNAELAASLNTILVTNPDNTADVYQDKIVLQKGYKLILNQLGDSSQKDVEITRYLVGVLALERKLVRSNSGLGMLAERINQVNRQLHHFAITDEQVIANLASIYSDIISNLGPKIQISGNPVCLQRPIIQQKIRALLLAAMRSAVLWRQLGGKRRHLVFARKAIVDTAKKSLTL.

The protein belongs to the HflD family.

It localises to the cytoplasm. The protein resides in the cell inner membrane. This Shewanella baltica (strain OS223) protein is High frequency lysogenization protein HflD homolog.